Reading from the N-terminus, the 183-residue chain is Putative 3-methyladenine DNA glycosylase (183 aa).

This sequence belongs to the DNA glycosylase MPG family.

This is Putative 3-methyladenine DNA glycosylase from Rickettsia rickettsii (strain Iowa).